Here is a 247-residue protein sequence, read N- to C-terminus: Oil body-associated protein 2B (247 aa).

Residues M1–T28 are disordered.

Belongs to the OBAP family.

The chain is Oil body-associated protein 2B from Arabidopsis thaliana (Mouse-ear cress).